The sequence spans 128 residues: Large ribosomal subunit protein bL20c (128 aa).

The protein belongs to the bacterial ribosomal protein bL20 family.

Its subcellular location is the plastid. The protein resides in the chloroplast. Its function is as follows. Binds directly to 23S ribosomal RNA and is necessary for the in vitro assembly process of the 50S ribosomal subunit. It is not involved in the protein synthesizing functions of that subunit. The chain is Large ribosomal subunit protein bL20c from Gossypium barbadense (Sea Island cotton).